Reading from the N-terminus, the 226-residue chain is Clarin-3 (226 aa).

A helical transmembrane segment spans residues 8–28 (LMFLSSFFTSLGSFIVICSIL). A glycan (N-linked (GlcNAc...) asparagine) is linked at N83. A run of 3 helical transmembrane segments spans residues 92–112 (VTIL…GFTF), 129–149 (VYTW…LFVA), and 181–201 (FWLI…IIFY).

This sequence belongs to the clarin family.

The protein localises to the membrane. The sequence is that of Clarin-3 (CLRN3) from Homo sapiens (Human).